Reading from the N-terminus, the 430-residue chain is Putative membrane fusion protein SilB (430 aa).

An N-terminal signal peptide occupies residues 1–28; that stretch reads MASLKIKYAAIIISSLIAGGLISVTAWQ. Residues 407–430 form a disordered region; sequence RHPEKTENSMPAMSEQPVNMHSGH. Over residues 414-430 the composition is skewed to polar residues; the sequence is NSMPAMSEQPVNMHSGH.

The protein belongs to the membrane fusion protein (MFP) (TC 8.A.1) family.

Component of the sil cation efflux system that confers resistance to silver. May be part of a three-component cation/proton antiporter. The sequence is that of Putative membrane fusion protein SilB (silB) from Salmonella typhimurium.